A 1249-amino-acid polypeptide reads, in one-letter code: LRR receptor-like serine/threonine-protein kinase GSO1 (1249 aa).

A signal peptide spans 1 to 18 (MQPLVLLLLFILCFSGLG). Residues 19–876 (QPGIINNDLQ…QQGLSARSVV (858 aa)) lie on the Extracellular side of the membrane. Residues N77 and N117 are each glycosylated (N-linked (GlcNAc...) asparagine). 31 LRR repeats span residues 94–118 (FDNL…LSNL), 119–142 (TSLE…LGSL), 144–166 (NIRS…LGNL), 168–190 (NLQM…LGRL), 191–214 (VRVQ…LGNC), 216–238 (DLTV…LGRL), 239–262 (ENLE…LGEM), 264–285 (QLQY…SLAD), 286–310 (LGNL…FWNM), 312–334 (QLLD…ICSN), 336–359 (TNLE…LSKC), 360–383 (QSLK…LFEL), 385–407 (ELTD…ISNL), 408–431 (TNLQ…ISAL), 433–455 (KLEV…IGNC), 457–479 (SLKM…IGRL), 480–503 (KELN…LGNC), 505–527 (QLNI…FGFL), 528–551 (KGLE…LISL), 553–574 (NLTR…LCGS), 576–598 (SYLS…LGNS), 599–622 (QNLD…LGKI), 623–646 (RELS…LVLC), 648–670 (KLTH…LGKL), 671–694 (SQLG…LFNC), 696–718 (KLLV…IGNL), 719–742 (GALN…MGKL), 744–766 (KLYE…IGQL), 767–791 (QDLQ…IGTL), 792–815 (SKLE…VGDM), and 817–838 (SLGY…QFSR). N213, N228, and N248 each carry an N-linked (GlcNAc...) asparagine glycan. N-linked (GlcNAc...) asparagine glycans are attached at residues N298, N309, and N334. Residues N369, N393, and N406 are each glycosylated (N-linked (GlcNAc...) asparagine). N454 carries an N-linked (GlcNAc...) asparagine glycan. N-linked (GlcNAc...) asparagine glycosylation is found at N537, N553, N558, and N565. Residues N693 and N708 are each glycosylated (N-linked (GlcNAc...) asparagine). The N-linked (GlcNAc...) asparagine glycan is linked to N779. N822 is a glycosylation site (N-linked (GlcNAc...) asparagine). A helical transmembrane segment spans residues 877–897 (IISAISALTAIGLMILVIALF). At 898–1249 (FKQRHDFFKK…NNRTAGYKKL (352 aa)) the chain is on the cytoplasmic side. The residue at position 948 (T948) is a Phosphothreonine. The Protein kinase domain occupies 951-1240 (LSEEFMIGSG…ACDSLLHVYN (290 aa)). Residues 957-965 (IGSGGSGKV) and K979 contribute to the ATP site. Residues Y1027 and Y1071 each carry the phosphotyrosine modification. Residue D1084 is the Proton acceptor of the active site. 2 positions are modified to phosphotyrosine: Y1129 and Y1136.

The protein belongs to the protein kinase superfamily. Ser/Thr protein kinase family. In terms of assembly, interacts with CIF1 and CIF2. Mostly expressed in siliques, seeds, developing embryos and seedlings, detected in flower buds and roots, but not in leaves or stems.

It localises to the cell membrane. The catalysed reaction is L-seryl-[protein] + ATP = O-phospho-L-seryl-[protein] + ADP + H(+). The enzyme catalyses L-threonyl-[protein] + ATP = O-phospho-L-threonyl-[protein] + ADP + H(+). Its function is as follows. Together with GSO2, receptor-like serine/threonine-kinase required during the development of the epidermal surface in embryos and cotyledons. In coordination with GSO2, regulates root growth through control of cell division and cell fate specification. Controls seedling root growth by modulating sucrose response after germination. Receptor of the peptide hormones CIF1 and CIF2 required for contiguous Casparian strip diffusion barrier formation in roots. Required for localizing CASP proteins into the Casparian strip following an uninterrupted, ring-like domain, to trigger endodermal differentiation and thus regulate potassium ion (K) homeostasis. Involved in the maintenance of water transport and root pressure. May also be involved in the regulation of suberin accumulation in the endodermis. This Arabidopsis thaliana (Mouse-ear cress) protein is LRR receptor-like serine/threonine-protein kinase GSO1.